Consider the following 527-residue polypeptide: Bifunctional methyltransferase (527 aa).

The tract at residues 1–309 (MQYSIKQVLS…GHSRVILFSP (309 aa)) is hemK. Residues 1-311 (MQYSIKQVLS…SRVILFSPIN (311 aa)) are RF MTase. S-adenosyl-L-methionine-binding positions include 149–153 (GTGSG), Asp-172, Trp-201, Asn-216, Glu-356, Glu-381, Asn-408, and Asp-430. Substrate is bound at residue 216–219 (NPPY). The tract at residues 310–527 (INLNRSYARR…IILQHVSGDH (218 aa)) is tRNA (guanine-N(7)-)-methyltransferase. The interval 314–527 (RSYARRIGKS…IILQHVSGDH (214 aa)) is tRNA MTase. Asp-430 is an active-site residue. The substrate site is built by Lys-434 and Asp-466.

It in the C-terminal section; belongs to the class I-like SAM-binding methyltransferase superfamily. TrmB family. The protein in the N-terminal section; belongs to the protein N5-glutamine methyltransferase family. PrmC subfamily.

It catalyses the reaction L-glutaminyl-[peptide chain release factor] + S-adenosyl-L-methionine = N(5)-methyl-L-glutaminyl-[peptide chain release factor] + S-adenosyl-L-homocysteine + H(+). It carries out the reaction guanosine(46) in tRNA + S-adenosyl-L-methionine = N(7)-methylguanosine(46) in tRNA + S-adenosyl-L-homocysteine. Methylates the class 1 translation termination release factors RF1/PrfA and RF2/PrfB on the glutamine residue of the universally conserved GGQ motif. Functionally, catalyzes the formation of N(7)-methylguanine at position 46 (m7G46) in tRNA. This Rickettsia felis (strain ATCC VR-1525 / URRWXCal2) (Rickettsia azadi) protein is Bifunctional methyltransferase (prmC/trmB).